The chain runs to 66 residues: Ocellatin-PT2 (66 aa).

The N-terminal stretch at 1–22 (MAFLKKSLFLVLFLGLVSLSIC) is a signal peptide. Positions 23–39 (DEEKRQDEDDDDDDDEE) are excised as a propeptide. Valine amide is present on Val-66.

As to expression, expressed by the skin glands.

The protein localises to the secreted. Its function is as follows. Has no antibacterial activity against Gram-negative bacteria E.coli ATCC 25922, S.pneumoniae ATCC 700603 and S.choleraesuis ATCC 14028 or against Gram-positive bacterium S.aureus ATCC 29313. Shows no hemolytic activity and no cytotoxicity. The protein is Ocellatin-PT2 of Leptodactylus pustulatus (Ceara white-lipped frog).